A 149-amino-acid chain; its full sequence is Nucleoside diphosphate kinase (149 aa).

6 residues coordinate ATP: Lys-9, Phe-57, Arg-85, Thr-91, Arg-102, and Asn-112. The active-site Pros-phosphohistidine intermediate is His-115.

This sequence belongs to the NDK family. As to quaternary structure, homotetramer. Mg(2+) is required as a cofactor.

Its subcellular location is the cytoplasm. The enzyme catalyses a 2'-deoxyribonucleoside 5'-diphosphate + ATP = a 2'-deoxyribonucleoside 5'-triphosphate + ADP. It catalyses the reaction a ribonucleoside 5'-diphosphate + ATP = a ribonucleoside 5'-triphosphate + ADP. In terms of biological role, major role in the synthesis of nucleoside triphosphates other than ATP. The ATP gamma phosphate is transferred to the NDP beta phosphate via a ping-pong mechanism, using a phosphorylated active-site intermediate. In Desulfitobacterium hafniense (strain Y51), this protein is Nucleoside diphosphate kinase.